Here is a 374-residue protein sequence, read N- to C-terminus: Beta-lytic metalloendopeptidase (374 aa).

A signal peptide spans 1-24; sequence MKKISKAGLGLALVCALATIGGNA. Residues 25–195 constitute a propeptide that is removed on maturation; the sequence is ARRATAQRRG…RQGRPGRAAV (171 aa). Positions 128 to 187 are disordered; the sequence is PTRQGAGDAGPRQSAAGAVRAFRRQRAGGRAARRRRVPAGLRPPVQRTAPGQGGFGPLRQ. Basic residues predominate over residues 148–164; the sequence is AFRRQRAGGRAARRRRV. Cysteines 261 and 307 form a disulfide. Residues His-316 and His-318 each coordinate Zn(2+). Cys-351 and Cys-364 form a disulfide bridge.

It belongs to the peptidase M23A family. Zn(2+) serves as cofactor.

Its subcellular location is the secreted. It catalyses the reaction Cleavage of N-acetylmuramoyl-|-Ala, and of the insulin B chain at 23-Gly-|-Phe-24 &gt; 18-Val-|-Cys(SO3H).. This chain is Beta-lytic metalloendopeptidase, found in Achromobacter lyticus.